Consider the following 114-residue polypeptide: Ribonuclease P protein component (114 aa).

The protein belongs to the RnpA family. In terms of assembly, consists of a catalytic RNA component (M1 or rnpB) and a protein subunit.

The enzyme catalyses Endonucleolytic cleavage of RNA, removing 5'-extranucleotides from tRNA precursor.. RNaseP catalyzes the removal of the 5'-leader sequence from pre-tRNA to produce the mature 5'-terminus. It can also cleave other RNA substrates such as 4.5S RNA. The protein component plays an auxiliary but essential role in vivo by binding to the 5'-leader sequence and broadening the substrate specificity of the ribozyme. The polypeptide is Ribonuclease P protein component (Exiguobacterium sp. (strain ATCC BAA-1283 / AT1b)).